The following is a 394-amino-acid chain: Acetate kinase 1 (394 aa).

Asparagine 8 is a binding site for Mg(2+). Position 15 (lysine 15) interacts with ATP. Position 90 (arginine 90) interacts with substrate. Aspartate 147 acts as the Proton donor/acceptor in catalysis. Residues 207 to 211 (HLGSG) and 282 to 284 (DMR) contribute to the ATP site. Residue glutamate 382 participates in Mg(2+) binding.

It belongs to the acetokinase family. Homodimer. It depends on Mg(2+) as a cofactor. The cofactor is Mn(2+).

Its subcellular location is the cytoplasm. The enzyme catalyses acetate + ATP = acetyl phosphate + ADP. It participates in metabolic intermediate biosynthesis; acetyl-CoA biosynthesis; acetyl-CoA from acetate: step 1/2. In terms of biological role, catalyzes the formation of acetyl phosphate from acetate and ATP. Can also catalyze the reverse reaction. This is Acetate kinase 1 from Latilactobacillus sakei subsp. sakei (strain 23K) (Lactobacillus sakei subsp. sakei).